We begin with the raw amino-acid sequence, 328 residues long: Nickel import system permease protein NikB (328 aa).

Helical transmembrane passes span 11-31, 104-124, 139-159, 170-190, 229-249, and 279-299; these read LMQMIVVLFVISTLTFILMKL, LLISFSTLVLSLCISIPLGII, VISTLSISLPAFFIGIILLFI, ILSQFILPVITLSLGMCAYII, ILPIIPLLGISLGSLIGGTVV, and VLFIGFFVVIINTIADLLTLL. The region spanning 100–297 is the ABC transmembrane type-1 domain; it reads APITLLISFS…IINTIADLLT (198 aa).

It belongs to the binding-protein-dependent transport system permease family. OppBC subfamily. The complex is composed of two ATP-binding proteins (NikD and NikE), two transmembrane proteins (NikB and NikC) and a solute-binding protein (NikA).

Its subcellular location is the cell membrane. Part of the ABC transporter complex NikABCDE (Opp2) involved in nickel import. Probably responsible for the translocation of the substrate across the membrane. In Staphylococcus aureus (strain bovine RF122 / ET3-1), this protein is Nickel import system permease protein NikB.